The chain runs to 538 residues: Cytochrome P450 52-M1 (538 aa).

The helical transmembrane segment at 18–38 threads the bilayer; that stretch reads GLLPLLFVAFLVLHEPIWLLW. Position 484 (Cys484) interacts with heme.

It belongs to the cytochrome P450 family. The cofactor is heme.

It localises to the membrane. It catalyses the reaction an omega-methyl-long-chain fatty acid + reduced [NADPH--hemoprotein reductase] + O2 = an omega-hydroxy-long-chain fatty acid + oxidized [NADPH--hemoprotein reductase] + H2O + H(+). It carries out the reaction an (omega-1)-ethyl fatty acid + reduced [NADPH--hemoprotein reductase] + O2 = an (omega-1)-hydroxy-long-chain fatty acid + oxidized [NADPH--hemoprotein reductase] + H2O + H(+). The catalysed reaction is (9Z)-octadecenoate + reduced [NADPH--hemoprotein reductase] + O2 = 18-hydroxy-(9Z)-octadecenoate + oxidized [NADPH--hemoprotein reductase] + H2O + H(+). The enzyme catalyses (9Z)-octadecenoate + reduced [NADPH--hemoprotein reductase] + O2 = 17-hydroxy-(9Z)-octadecenoate + oxidized [NADPH--hemoprotein reductase] + H2O + H(+). It catalyses the reaction (9Z,12Z)-octadecadienoate + reduced [NADPH--hemoprotein reductase] + O2 = 18-hydroxy-(9Z,12Z)-octadecadienoate + oxidized [NADPH--hemoprotein reductase] + H2O + H(+). It carries out the reaction (9Z,12Z)-octadecadienoate + reduced [NADPH--hemoprotein reductase] + O2 = 17-hydroxy-(9Z,12Z)-octadecadienoate + oxidized [NADPH--hemoprotein reductase] + H2O + H(+). The catalysed reaction is hexadecanoate + reduced [NADPH--hemoprotein reductase] + O2 = 16-hydroxyhexadecanoate + oxidized [NADPH--hemoprotein reductase] + H2O + H(+). The enzyme catalyses (9Z)-hexadecenoate + reduced [NADPH--hemoprotein reductase] + O2 = (9Z)-16-hydroxyhexadec-9-enoate + oxidized [NADPH--hemoprotein reductase] + H2O + H(+). It catalyses the reaction octadecanoate + reduced [NADPH--hemoprotein reductase] + O2 = 18-hydroxyoctadecanoate + oxidized [NADPH--hemoprotein reductase] + H2O + H(+). Functionally, catalyzes the first step of sophorolipid biosynthesis. Catalyzes the terminal (at the omega-position) or subterminal (at the omega(-1)-position) hydroxylation of a fatty acid. This converts the fatty acid to a substrate for the subsequent glycosyltransferase reactions. Oleic acid is the preferred substrate, but it acts on various other C-16, C-18 and C-20 saturated and unsaturated fatty acids, namely palmitic, palmitoleic, stearic, linoleic, cis-9,10-epoxystearic, trans-9,10-epoxystearic and arachidonic acid. This Starmerella bombicola (Yeast) protein is Cytochrome P450 52-M1.